The following is an 834-amino-acid chain: Protein argonaute (834 aa).

The region spanning 210–326 is the PAZ domain; the sequence is SLLQILMEYT…LPIEFCFVVK (117 aa). The Piwi domain occupies 500 to 799; sequence YLFFILDKNS…VSNLARYQDV (300 aa).

The protein belongs to the argonaute family. Ago subfamily. In terms of assembly, ago1, chp1 and tas3 interact to form the core of the RNA-induced transcriptional silencing (RITS) complex. The RITS complex interacts with the RDRC complex via interaction between ago1 and hrr1. Clr4 has a role in mediating this interaction. Component of the argonaute siRNA chaperone (ARC) complex composed of ago1, arb1 and arb2. Interacts with arb1.

It is found in the cytoplasm. Its subcellular location is the nucleus. The protein resides in the chromosome. The protein localises to the centromere. It localises to the telomere. Its function is as follows. Required for G1 arrest and mating in response to nitrogen starvation. Ago1 regulation of cytokinesis and cell cycle checkpoints occurs downstream of dcr1. Required, indirectly, for regulated hyperphosphorylation of cdc2. Has a role in the RNA interference (RNAi) pathway which is important for heterochromatin formation, accurate chromosome segregation, centromere cohesion and telomere function during mitosis and meiosis. Required for silencing at the centromeres and for initiation of transcriptionally silent heterochromatin at the mating type locus. Promotes histone H3K9 methylation necessary for centromere function. Required for recruitment of swi6 and cohesin to an ectopic dg repeat. A member of the RNA-induced transcriptional silencing (RITS) complex which is involved in the biosynthesis of dsRNA from primer siRNAs provided by the RNA-directed RNA polymerase (RDRC) complex. Has ribonuclease H-like cleavage (slicing) activity towards target messages complementary to siRNA and can direct site-specific cleavage of RNA substrates via siRNA. Slicing activity is required for both post-transcriptional and transcriptional gene silencing as well as for histone H3 'Lys-10' methylation spreading, conversion of double-stranded siRNA to single-stranded siRNA and siRNA-dependent association of ago1 with chromatin. A member of the argonaute siRNA chaperone (ARC) complex which is required for histone H3K9 methylation, heterochromatin assembly and siRNA generation. The ARC complex contains mostly double-stranded siRNA. The sequence is that of Protein argonaute (ago1) from Schizosaccharomyces pombe (strain 972 / ATCC 24843) (Fission yeast).